We begin with the raw amino-acid sequence, 839 residues long: uncharacterized protein (839 aa).

Disordered regions lie at residues 504–611, 627–646, and 682–839; these read TVSP…NVVN, KNNNSSSNDNEYKNSNDNHC, and NHNY…SLGS. Positions 509-611 are enriched in low complexity; it reads GNNNVTGDVD…EGSNNCNVVN (103 aa). Residues 636 to 646 are compositionally biased toward basic and acidic residues; sequence NEYKNSNDNHC. Composition is skewed to low complexity over residues 689–704 and 713–753; these read NGNNENDCKNNNNNNN and QQQP…NNNK. The stretch at 726–764 forms a coiled coil; the sequence is QQSQQQPQLQQKKQQIQEEQQNLNNNNKSIEDDEEAFNS. Over residues 765 to 776 the composition is skewed to basic and acidic residues; that stretch reads DDEHDHEDDSIR. Acidic residues predominate over residues 809–823; sequence EDNDDDSDISDSDSD.

This is an uncharacterized protein from Dictyostelium discoideum (Social amoeba).